Consider the following 82-residue polypeptide: Cytochrome b559 subunit alpha (82 aa).

A helical transmembrane segment spans residues 21-35; the sequence is VIHSITIPALFIAGW. His23 lines the heme pocket.

It belongs to the PsbE/PsbF family. In terms of assembly, heterodimer of an alpha subunit and a beta subunit. PSII is composed of 1 copy each of membrane proteins PsbA, PsbB, PsbC, PsbD, PsbE, PsbF, PsbH, PsbI, PsbJ, PsbK, PsbL, PsbM, PsbT, PsbX, PsbY, PsbZ, Psb30/Ycf12, peripheral proteins PsbO, CyanoQ (PsbQ), PsbU, PsbV and a large number of cofactors. It forms dimeric complexes. The cofactor is heme b.

The protein resides in the cellular thylakoid membrane. Its function is as follows. This b-type cytochrome is tightly associated with the reaction center of photosystem II (PSII). PSII is a light-driven water:plastoquinone oxidoreductase that uses light energy to abstract electrons from H(2)O, generating O(2) and a proton gradient subsequently used for ATP formation. It consists of a core antenna complex that captures photons, and an electron transfer chain that converts photonic excitation into a charge separation. The sequence is that of Cytochrome b559 subunit alpha from Nostoc punctiforme (strain ATCC 29133 / PCC 73102).